The sequence spans 820 residues: Leucine--tRNA ligase (820 aa).

Residues Pro40–His51 carry the 'HIGH' region motif. The 'KMSKS' region signature appears at Lys601 to Ser605. Residue Lys604 coordinates ATP.

Belongs to the class-I aminoacyl-tRNA synthetase family.

The protein localises to the cytoplasm. The catalysed reaction is tRNA(Leu) + L-leucine + ATP = L-leucyl-tRNA(Leu) + AMP + diphosphate. The sequence is that of Leucine--tRNA ligase from Chlamydia felis (strain Fe/C-56) (Chlamydophila felis).